The primary structure comprises 736 residues: Nucleoporin nup60 (736 aa).

Residues 1-46 (MSSGPIRTLHKGKAARNRTPYDRIAASKDGNHSNGPQTPSKSIFQR) form a disordered region. Positions 19–31 (TPYDRIAASKDGN) are enriched in basic and acidic residues. Polar residues predominate over residues 32-43 (HSNGPQTPSKSI). Phosphoserine occurs at positions 157, 159, 161, and 162. 5 disordered regions span residues 178–210 (RAAAISKRESGVSSEPRARTSSLTPGNTPNSAK), 295–321 (DTSFTNVPTSSPLHQSTTANHPEKTPS), 338–519 (TPSI…PNET), 565–614 (AVTD…RSLF), and 647–701 (EQAE…FPKF). Polar residues-rich tracts occupy residues 196–210 (RTSSLTPGNTPNSAK) and 295–314 (DTSFTNVPTSSPLHQSTTAN). The span at 375-397 (QIRPSSEKSEPEKKEPSAFETLE) shows a compositional bias: basic and acidic residues. A compositionally biased stretch (polar residues) spans 456-473 (SATTDKPSPPVSSIFSFN). 2 stretches are compositionally biased toward low complexity: residues 474-505 (APSAASTKPSPAVSSTFSFNAPTTTPSATSFS) and 573-587 (EVSSSNQASSSTMIS). Polar residues predominate over residues 588–597 (QPNTGFSFGS). Residues 664–692 (EVEKPSAEGTNEHKQDATMTLEKTDKQGS) are compositionally biased toward basic and acidic residues.

As to quaternary structure, component of the nuclear pore complex (NPC). NPC constitutes the exclusive means of nucleocytoplasmic transport. NPCs allow the passive diffusion of ions and small molecules and the active, nuclear transport receptor-mediated bidirectional transport of macromolecules such as proteins, RNAs, ribonucleoparticles (RNPs), and ribosomal subunits across the nuclear envelope.

Its subcellular location is the nucleus. The protein localises to the nuclear pore complex. The protein resides in the nucleus membrane. Functions as a component of the nuclear pore complex (NPC). NPC components, collectively referred to as nucleoporins (NUPs), can play the role of both NPC structural components and of docking or interaction partners for transiently associated nuclear transport factors. Active directional transport is assured by both, a Phe-Gly (FG) repeat affinity gradient for these transport factors across the NPC and a transport cofactor concentration gradient across the nuclear envelope. This Schizosaccharomyces pombe (strain 972 / ATCC 24843) (Fission yeast) protein is Nucleoporin nup60 (nup60).